Reading from the N-terminus, the 622-residue chain is Low affinity potassium transport system protein Kup (622 aa).

The next 12 membrane-spanning stretches (helical) occupy residues 9–29 (LPAI…TSPL), 49–69 (VFGF…IKYL), 103–123 (VIMG…TPAI), 137–157 (PQLD…LFMI), 165–185 (VGKL…GLGL), 213–233 (VSFI…ALYA), 247–267 (WFTV…ALLL), 276–296 (PFFL…AALA), 337–357 (IYIP…IVSF), 363–383 (LAAA…ILST), 396–416 (FVAL…TANL), and 419–439 (LLSG…VMTT).

The protein belongs to the HAK/KUP transporter (TC 2.A.72) family.

Its subcellular location is the cell inner membrane. The catalysed reaction is K(+)(in) + H(+)(in) = K(+)(out) + H(+)(out). In terms of biological role, responsible for the low-affinity transport of potassium into the cell. Likely operates as a K(+):H(+) symporter. The polypeptide is Low affinity potassium transport system protein Kup (Escherichia coli (strain K12 / MC4100 / BW2952)).